The sequence spans 415 residues: Sensor protein kinase WalK (415 aa).

An HAMP domain is found at 11 to 63; sequence RTITKPITDMRNQTVEMSRGNYTQRVKIYGNDEIGELALAFNNLSKRVQEAQA. In terms of domain architecture, PAS spans 68 to 138; it reads EKRRLDSVIT…EIQENNDSFL (71 aa). 4 residues coordinate Zn(2+): His-78, Asp-81, His-171, and Glu-175. The region spanning 121–185 is the PAC domain; the sequence is LEDEFKLEEI…QQQVERERRE (65 aa). In terms of domain architecture, Histidine kinase spans 189-407; it reads NVSHELRTPL…SIFITLPCEV (219 aa). His-192 bears the Phosphohistidine; by autocatalysis mark.

Forms homodimers. Forms homooligomers. NH4(+) serves as cofactor. In terms of processing, autophosphorylated.

The protein localises to the cell membrane. It catalyses the reaction ATP + protein L-histidine = ADP + protein N-phospho-L-histidine.. With respect to regulation, by zinc. Zinc-binding negatively regulates WalK kinase activity and thus autophosphorylation. Member of the two-component regulatory system WalK/WalR that regulates genes involved in cell wall metabolism, virulence regulation, biofilm production, oxidative stress resistance and antibiotic resistance via direct or indirect regulation of autolysins. Functions as a sensor protein kinase which is autophosphorylated at a histidine residue in the dimerization domain and transfers its phosphate group to the conserved aspartic acid residue in the regulatory domain of WalR. In turn, WalR binds to the upstream promoter regions of the target genes to positively and negatively regulate their expression. In Staphylococcus aureus, this protein is Sensor protein kinase WalK (walK).